Reading from the N-terminus, the 258-residue chain is Indole-3-glycerol phosphate synthase 2 (258 aa).

The protein belongs to the TrpC family.

The enzyme catalyses 1-(2-carboxyphenylamino)-1-deoxy-D-ribulose 5-phosphate + H(+) = (1S,2R)-1-C-(indol-3-yl)glycerol 3-phosphate + CO2 + H2O. Its pathway is amino-acid biosynthesis; L-tryptophan biosynthesis; L-tryptophan from chorismate: step 4/5. In terms of biological role, the function of the second trp operon in S.coelicolor is to produce tryptophan for the biosynthesis of calcium-dependent antibiotic (CDA). This chain is Indole-3-glycerol phosphate synthase 2 (trpC2), found in Streptomyces coelicolor (strain ATCC BAA-471 / A3(2) / M145).